A 448-amino-acid polypeptide reads, in one-letter code: Probable glycine dehydrogenase (decarboxylating) subunit 1 (448 aa).

It belongs to the GcvP family. N-terminal subunit subfamily. In terms of assembly, the glycine cleavage system is composed of four proteins: P, T, L and H. In this organism, the P 'protein' is a heterodimer of two subunits.

It carries out the reaction N(6)-[(R)-lipoyl]-L-lysyl-[glycine-cleavage complex H protein] + glycine + H(+) = N(6)-[(R)-S(8)-aminomethyldihydrolipoyl]-L-lysyl-[glycine-cleavage complex H protein] + CO2. In terms of biological role, the glycine cleavage system catalyzes the degradation of glycine. The P protein binds the alpha-amino group of glycine through its pyridoxal phosphate cofactor; CO(2) is released and the remaining methylamine moiety is then transferred to the lipoamide cofactor of the H protein. The protein is Probable glycine dehydrogenase (decarboxylating) subunit 1 of Staphylococcus aureus (strain Mu3 / ATCC 700698).